The chain runs to 348 residues: Histidinol-phosphate aminotransferase (348 aa).

Lys210 is subject to N6-(pyridoxal phosphate)lysine.

It belongs to the class-II pyridoxal-phosphate-dependent aminotransferase family. Histidinol-phosphate aminotransferase subfamily. As to quaternary structure, homodimer. It depends on pyridoxal 5'-phosphate as a cofactor.

The enzyme catalyses L-histidinol phosphate + 2-oxoglutarate = 3-(imidazol-4-yl)-2-oxopropyl phosphate + L-glutamate. Its pathway is amino-acid biosynthesis; L-histidine biosynthesis; L-histidine from 5-phospho-alpha-D-ribose 1-diphosphate: step 7/9. The polypeptide is Histidinol-phosphate aminotransferase (Pseudomonas putida (strain W619)).